Here is a 265-residue protein sequence, read N- to C-terminus: DNA repair protein RecO (265 aa).

It belongs to the RecO family.

Its function is as follows. Involved in DNA repair and RecF pathway recombination. This chain is DNA repair protein RecO, found in Mycobacterium marinum (strain ATCC BAA-535 / M).